We begin with the raw amino-acid sequence, 485 residues long: Glutamyl-tRNA(Gln) amidotransferase subunit A (485 aa).

Catalysis depends on charge relay system residues K78 and S153. S177 (acyl-ester intermediate) is an active-site residue.

It belongs to the amidase family. GatA subfamily. In terms of assembly, heterotrimer of A, B and C subunits.

It carries out the reaction L-glutamyl-tRNA(Gln) + L-glutamine + ATP + H2O = L-glutaminyl-tRNA(Gln) + L-glutamate + ADP + phosphate + H(+). Its function is as follows. Allows the formation of correctly charged Gln-tRNA(Gln) through the transamidation of misacylated Glu-tRNA(Gln) in organisms which lack glutaminyl-tRNA synthetase. The reaction takes place in the presence of glutamine and ATP through an activated gamma-phospho-Glu-tRNA(Gln). This Bacillus cereus (strain ZK / E33L) protein is Glutamyl-tRNA(Gln) amidotransferase subunit A.